The chain runs to 500 residues: Probable malate:quinone oxidoreductase (500 aa).

The protein belongs to the MQO family. The cofactor is FAD.

The enzyme catalyses (S)-malate + a quinone = a quinol + oxaloacetate. It participates in carbohydrate metabolism; tricarboxylic acid cycle; oxaloacetate from (S)-malate (quinone route): step 1/1. This Bacillus anthracis (strain A0248) protein is Probable malate:quinone oxidoreductase.